Consider the following 253-residue polypeptide: Small ribosomal subunit protein eS4 (253 aa).

The region spanning 43–114 (LPLLLIVRNV…YPVKFFKLHP (72 aa)) is the S4 RNA-binding domain.

It belongs to the eukaryotic ribosomal protein eS4 family.

The polypeptide is Small ribosomal subunit protein eS4 (rps4e) (Aeropyrum pernix (strain ATCC 700893 / DSM 11879 / JCM 9820 / NBRC 100138 / K1)).